A 5900-amino-acid chain; its full sequence is Midasin (5900 aa).

Residues 250–270 (GSSVKSKKGGEQQQEGEGEDE) form a disordered region. AAA-ATPase protomer regions lie at residues 278–583 (TNTV…LRKQ), 673–1012 (EKIS…ALNY), 1101–1346 (PIIP…IAGY), 1411–1721 (IVWT…MDKQ), 1840–2089 (RGMQ…HVLT), and 2167–2451 (LENI…EIYM). Residues 302–309 (GVTGSGKT) and 689–696 (GETGTGKT) contribute to the ATP site. Residues 796-826 (QTTTNNTKENNNNNNNNNNNNNNNNNNKKRT) form a disordered region. Over residues 797–821 (TTTNNTKENNNNNNNNNNNNNNNNN) the composition is skewed to low complexity. ATP contacts are provided by residues 1135-1142 (GPTSSGKT), 1438-1445 (GETGCSKT), 1852-1859 (GSPGVGKT), and 2184-2191 (GPTSTSKT). The segment at 2562-4965 (ESAIKSILCE…EGKGKKDVSD (2404 aa)) is linker. Residues 4932 to 5598 (GDDGEGGEGG…SVEEKKLTRE (667 aa)) are disordered. The span at 4984 to 5008 (KDEDEDEEKEEKDEDEGFDMQDDFE) shows a compositional bias: acidic residues. Over residues 5009 to 5055 (GEMHDIKKDENKDEDKKDDPNNEKENDKEMGDLEKPEDNVVDEKLWD) the composition is skewed to basic and acidic residues. A compositionally biased stretch (acidic residues) spans 5056–5076 (EQDVQDEEEQDEEGKGDETNS). The span at 5079 to 5113 (MMAKQDGKDDNDDDKKDDDKKDDKKKKKEENGKPD) shows a compositional bias: basic and acidic residues. Acidic residues-rich tracts occupy residues 5114–5130 (ENEEGEEGKDDEEEDGK) and 5139–5156 (GASDEDDFGQEENEDDVI). Over residues 5159–5173 (EQEKEENHGDPRGDD) the composition is skewed to basic and acidic residues. Residues 5174–5199 (QMEIPEDLELEDPDEGKEDDEQQDGG) show a composition bias toward acidic residues. Residues 5213 to 5224 (DVSKEEEKKKEL) show a composition bias toward basic and acidic residues. Acidic residues-rich tracts occupy residues 5225 to 5255 (DGDEKEESDQDGDEEKEDEEKEDGDEDEDKE) and 5273 to 5286 (EGDEPEKEQPEEDQ). The span at 5297 to 5313 (ETPKDSEQPLGVKDKTG) shows a compositional bias: basic and acidic residues. Residues 5339–5349 (GMTQPTPSEND) show a composition bias toward polar residues. Positions 5410 to 5442 (SEPKEKAPKQDPNAKENENQDYEFIKDDEKLDK) are enriched in basic and acidic residues. Residues 5448–5460 (QALAAATDTQLQD) show a composition bias toward low complexity. Residues 5469 to 5487 (DQAEQEEDQMDIDEEDDMD) show a composition bias toward acidic residues. Basic and acidic residues-rich tracts occupy residues 5488 to 5536 (VDHK…KDQQ) and 5551 to 5570 (QFTKEQLENLTNLDKEKAVL). Acidic residues predominate over residues 5571–5590 (DDGDDQEMEQDGDQDDEESV). A VWFA domain is found at 5696–5889 (QVLLAIDDTE…NIPSILSDTL (194 aa)).

This sequence belongs to the midasin family. As to quaternary structure, associates with pre-60S ribosomes in the nucleoplasm.

It is found in the nucleus. The protein localises to the nucleolus. It localises to the nucleoplasm. Its function is as follows. Nuclear chaperone required for maturation and nuclear export of pre-60S ribosome subunits. Functions at successive maturation steps to remove ribosomal factors at critical transition points, first driving the exit of early pre-60S particles from the nucleolus and then driving late pre-60S particles from the nucleus. The sequence is that of Midasin (mdn1) from Dictyostelium discoideum (Social amoeba).